A 519-amino-acid polypeptide reads, in one-letter code: SMR domain-containing protein At5g58720 (519 aa).

Residues 1–15 (MKQKNQHKKKKKRSC) are compositionally biased toward basic residues. Disordered regions lie at residues 1–47 (MKQK…REIE) and 92–128 (ESGD…CSED). Positions 28–47 (GNKKDVEEERKDGEGKREIE) are enriched in basic and acidic residues. Positions 98–127 (STSSVASGSSGQETASTSEYGAGSSSSCSE) are enriched in low complexity. Residues 428–502 (IDLHGQHVKP…NRGTLLIKLD (75 aa)) enclose the Smr domain.

In terms of assembly, interacts with PRL1.

The chain is SMR domain-containing protein At5g58720 from Arabidopsis thaliana (Mouse-ear cress).